Consider the following 228-residue polypeptide: MNQSLLTPYGTAFERVEAGLTAIREGRGVLVVDDEDRENEGDIIFAAETLTSEQMALMIRECSGIVCLCLTDERVKQLELPMMVENNTSANETGFTVTIEAAKGVTTGVSAADRVTTIKTAIADGAVPADLNHPGHVFPLKANADGVLGRRGHTEATIDLMRLSGLKPYGVLCELTNIDGTMARLPEVIVFGKKFNMPVLTIEDLAAYRLAKESNTVTNTTEEVAVIA.

Residues R37 to E38, D42, R150 to T154, and E174 each bind D-ribulose 5-phosphate. Mg(2+) is bound at residue E38. Residue H153 coordinates Mg(2+).

This sequence belongs to the DHBP synthase family. Homodimer. The cofactor is Mg(2+). Mn(2+) is required as a cofactor.

The enzyme catalyses D-ribulose 5-phosphate = (2S)-2-hydroxy-3-oxobutyl phosphate + formate + H(+). It functions in the pathway cofactor biosynthesis; riboflavin biosynthesis; 2-hydroxy-3-oxobutyl phosphate from D-ribulose 5-phosphate: step 1/1. In terms of biological role, catalyzes the conversion of D-ribulose 5-phosphate to formate and 3,4-dihydroxy-2-butanone 4-phosphate. The protein is 3,4-dihydroxy-2-butanone 4-phosphate synthase of Photobacterium profundum (strain SS9).